Reading from the N-terminus, the 380-residue chain is GATOR1 complex protein NPRL2 (380 aa).

The tract at residues 1–133 (MGSSCRIECI…SKQKLVPIMT (133 aa)) is interaction with PDPK1. R78 lines the GDP pocket. Residue R78 is modified to Asymmetric dimethylarginine. Glycyl lysine isopeptide (Lys-Gly) (interchain with G-Cter in ubiquitin) cross-links involve residues K158 and K357.

It belongs to the NPR2 family. Within the GATOR complex, component of the GATOR1 subcomplex, made of DEPDC5, NPRL2 and NPRL3. GATOR1 mediates the strong interaction of the GATOR complex with small GTPases Rag (RagA/RRAGA, RagB/RRAGB, RagC/RRAGC and/or RagD/RRAGD) heterodimers. GATOR1 interacts with GPR155/LYCHOS; interaction takes place in presence of cholesterol and prevents interaction between GATOR1 and KICSTOR. Interacts with PDPK1. In terms of processing, in the presence of abundant amino acids, ubiquitinated at Lys-158 and Lys-357 via 'Lys-6'-linked ubiquitination by the WDR24 component of the GATOR2 complex, thereby inhibiting the GATOR1 complex and promoting mTORC1 activation. Post-translationally, asymmetric dimethylation at Arg-78 by PRMT1 inhibits the GTPase activator activity of the GATOR1 complex and consequently inducing timely mTORC1 activation under methionine-sufficient conditions.

It is found in the lysosome membrane. In terms of biological role, catalytic component of the GATOR1 complex, a multiprotein complex that functions as an inhibitor of the amino acid-sensing branch of the mTORC1 pathway. In response to amino acid depletion, the GATOR1 complex has GTPase activating protein (GAP) activity and strongly increases GTP hydrolysis by RagA/RRAGA (or RagB/RRAGB) within heterodimeric Rag complexes, thereby turning them into their inactive GDP-bound form, releasing mTORC1 from lysosomal surface and inhibiting mTORC1 signaling. In the presence of abundant amino acids, the GATOR1 complex is ubiquitinated and inhibited by GATOR2. Within the GATOR1 complex, NPRL2 constitutes the catalytic subunit that mediates the GTPase activator activity and under methionine-sufficient conditions, the GTPase activator activity is inhibited by PRMT1 through methylation and consequently inducing timely mTORC1 activation. Functionally, suppresses Src-dependent tyrosine phosphorylation and activation of PDPK1 and its downstream signaling. Down-regulates PDPK1 kinase activity by interfering with tyrosine phosphorylation at 'Tyr-9', 'Tyr-373' and 'Tyr-376' residues. May act as a tumor suppressor. Suppresses cell growth and enhances sensitivity to various anticancer drugs. The protein is GATOR1 complex protein NPRL2 of Mus musculus (Mouse).